Consider the following 177-residue polypeptide: Anti-apoptotic protein NR13 (177 aa).

The BH1 signature appears at 75 to 94; sequence LETDGGLNWGRLLALVVFAG. The helical transmembrane segment at 86-106 threads the bilayer; the sequence is LLALVVFAGTLAAALAESACE. The BH2 motif lies at 126-141; sequence EWMEEHGGWDGFCRFF. The chain crosses the membrane as a helical span at residues 156-176; it reads SNAIMAAAGFGIAGLAFLLVV.

Belongs to the Bcl-2 family. Interacts with BAX. In terms of tissue distribution, mainly expressed in neural and muscular tissues.

It is found in the cell membrane. In terms of biological role, shows anti-apoptotic properties. Counteract the pro-apoptotic activity of BAX. The polypeptide is Anti-apoptotic protein NR13 (NR13) (Coturnix japonica (Japanese quail)).